We begin with the raw amino-acid sequence, 56 residues long: Meucin-25 (56 aa).

The N-terminal stretch at 1–31 (MFRIEYSLVQLLLRNVTIPLLLIIQMHIMSS) is a signal peptide.

This sequence belongs to the non-disulfide-bridged peptide (NDBP) superfamily. Antimalarial peptide (group 5) family. As to expression, expressed by the venom gland.

It is found in the secreted. This synthetic cationic peptide inhibits the development of Plasmodium berghei ookinetes, kills intraerythrocytic P.falciparum, and is cytotoxic to the Drosophila S2 cell at micromolar concentrations. No antibacterial, antifungal and hemolytic activities have been found at micromolar concentrations. This chain is Meucin-25, found in Mesobuthus eupeus (Lesser Asian scorpion).